A 106-amino-acid chain; its full sequence is Small cardioactive peptide-related peptide (106 aa).

An N-terminal signal peptide occupies residues 1–20; it reads MFCKHLSFVAITICFLLVLA. Residues 21–41 constitute a propeptide, amino-terminal spacer peptide; that stretch reads KTENEIQQKNIKFDQRTWRNM. At Gln-52 the chain carries Glutamine amide. A propeptide spans 55–106 (carboxy-terminal spacer peptide); sequence SDNQPDYTCCGMPLTKYVGICPIGMECCPGLKKVLQKSGQRTIYSVCVADAY.

As to expression, expression is seen in the peripheral and central nervous systems in tissues such as the brain, the inferior buccal ganglion, the gastric ganglion, the olfactory lobe, the peduncle lobe and the optic lobe. Expression in the brain is distributed in the median inferior frontal lobe, the superior buccal lobe, the prebranchial lobe and the pedal lobe. Not expressed in the vasomotor lobe or the palliovisceral lobe that controls the cardiac system.

The protein localises to the secreted. In terms of biological role, evokes contractions in the radula protractor muscle, and may regulate feeding behavior and gut motility by controlling muscle contraction of the buccal mass. This chain is Small cardioactive peptide-related peptide, found in Octopus vulgaris (Common octopus).